The primary structure comprises 180 residues: Nucleoid-associated protein At4g30620, chloroplastic (180 aa).

Residues 1-48 constitute a chloroplast transit peptide; sequence MASTATNTDFFKTLLSPFSNGNAAQRSSRQNIVWLNRKQSGNNNRSLR. The disordered stretch occupies residues 45–65; it reads RSLRVNGLFGGGKKDNKEDGQ. Residues 56–65 are compositionally biased toward basic and acidic residues; it reads GKKDNKEDGQ.

Belongs to the YbaB/EbfC family. Homodimer. Binds to the translation initiation factors TIF3E1.

The protein resides in the plastid. It localises to the chloroplast. Functionally, binds to DNA and alters its conformation. May be involved in regulation of gene expression, nucleoid organization and DNA protection. In Arabidopsis thaliana (Mouse-ear cress), this protein is Nucleoid-associated protein At4g30620, chloroplastic.